We begin with the raw amino-acid sequence, 64 residues long: Small ribosomal subunit protein bS21 (64 aa).

Belongs to the bacterial ribosomal protein bS21 family.

This is Small ribosomal subunit protein bS21 from Pelagibacter ubique (strain HTCC1062).